The chain runs to 269 residues: Eukaryotic translation initiation factor 3 subunit G-1 (269 aa).

The 79-residue stretch at 188–266 (AAIRISNLSE…LILSVEWSKP (79 aa)) folds into the RRM domain.

The protein belongs to the eIF-3 subunit G family. Component of the eukaryotic translation initiation factor 3 (eIF-3) complex. The eIF-3 complex interacts with pix.

The protein resides in the cytoplasm. Functionally, RNA-binding component of the eukaryotic translation initiation factor 3 (eIF-3) complex, which is involved in protein synthesis of a specialized repertoire of mRNAs and, together with other initiation factors, stimulates binding of mRNA and methionyl-tRNAi to the 40S ribosome. The eIF-3 complex specifically targets and initiates translation of a subset of mRNAs involved in cell proliferation. This subunit can bind 18S rRNA. The sequence is that of Eukaryotic translation initiation factor 3 subunit G-1 from Drosophila virilis (Fruit fly).